The primary structure comprises 248 residues: Probable transcriptional regulatory protein BT_2363 (248 aa).

The protein belongs to the TACO1 family.

Its subcellular location is the cytoplasm. The protein is Probable transcriptional regulatory protein BT_2363 of Bartonella tribocorum (strain CIP 105476 / IBS 506).